The sequence spans 75 residues: ATP synthase subunit c (75 aa).

A run of 2 helical transmembrane segments spans residues 8–28 (FIAI…VANI) and 54–74 (AGMV…LMFV).

Belongs to the ATPase C chain family. As to quaternary structure, F-type ATPases have 2 components, F(1) - the catalytic core - and F(0) - the membrane proton channel. F(1) has five subunits: alpha(3), beta(3), gamma(1), delta(1), epsilon(1). F(0) has three main subunits: a(1), b(2) and c(10-14). The alpha and beta chains form an alternating ring which encloses part of the gamma chain. F(1) is attached to F(0) by a central stalk formed by the gamma and epsilon chains, while a peripheral stalk is formed by the delta and b chains.

The protein resides in the cell membrane. Its function is as follows. F(1)F(0) ATP synthase produces ATP from ADP in the presence of a proton or sodium gradient. F-type ATPases consist of two structural domains, F(1) containing the extramembraneous catalytic core and F(0) containing the membrane proton channel, linked together by a central stalk and a peripheral stalk. During catalysis, ATP synthesis in the catalytic domain of F(1) is coupled via a rotary mechanism of the central stalk subunits to proton translocation. Functionally, key component of the F(0) channel; it plays a direct role in translocation across the membrane. A homomeric c-ring of between 10-14 subunits forms the central stalk rotor element with the F(1) delta and epsilon subunits. In Wolbachia sp. subsp. Brugia malayi (strain TRS), this protein is ATP synthase subunit c.